We begin with the raw amino-acid sequence, 296 residues long: Urease accessory protein UreD (296 aa).

The protein belongs to the UreD family. As to quaternary structure, ureD, UreF and UreG form a complex that acts as a GTP-hydrolysis-dependent molecular chaperone, activating the urease apoprotein by helping to assemble the nickel containing metallocenter of UreC. The UreE protein probably delivers the nickel.

Its subcellular location is the cytoplasm. Required for maturation of urease via the functional incorporation of the urease nickel metallocenter. The polypeptide is Urease accessory protein UreD (Methylibium petroleiphilum (strain ATCC BAA-1232 / LMG 22953 / PM1)).